The chain runs to 337 residues: GDP-mannose transporter 1 (337 aa).

The Cytoplasmic segment spans residues 1–16; it reads MSELKTGHAGHNPWAS. A helical membrane pass occupies residues 17–37; that stretch reads VANSGPISILSYCGSSILMTV. Residues 38 to 51 lie on the Lumenal side of the membrane; it reads TNKFVVNLKDFNMN. A helical transmembrane segment spans residues 52–72; sequence FVMLFVQSLVCTITLIILRIL. Residues 73–92 are Cytoplasmic-facing; that stretch reads GYAKFRSLNKTDAKNWFPIS. A helical membrane pass occupies residues 93 to 113; that stretch reads FLLVLMIYTSSKALQYLAVPI. Residues 114–119 lie on the Lumenal side of the membrane; sequence YTIFKN. Asn-119 carries N-linked (GlcNAc...) asparagine glycosylation. A helical membrane pass occupies residues 120 to 140; the sequence is LTIILIAYGEVLFFGGSVTSM. The Cytoplasmic portion of the chain corresponds to 141 to 144; the sequence is ELSS. A helical membrane pass occupies residues 145–165; sequence FLLMVLSSVVATWGDQQAVAA. The Lumenal segment spans residues 166-180; sequence KAASLAEGAAGAVAS. A helical membrane pass occupies residues 181–201; it reads FNPGYFWMFTNCITSALFVLI. The Cytoplasmic portion of the chain corresponds to 202-215; the sequence is MRKRIKLTNFKDFD. The helical transmembrane segment at 216-236 threads the bilayer; sequence TMFYNNVLALPILLLFSFCVE. Residues 237–252 are Lumenal-facing; sequence DWSSVNLTNNFSNDSL. N-linked (GlcNAc...) asparagine glycosylation is found at Asn-242, Asn-246, and Asn-249. The chain crosses the membrane as a helical span at residues 253–273; it reads TAMIISGVASVGISYCSGWCV. Over 274-279 the chain is Cytoplasmic; that stretch reads RVTSST. A helical transmembrane segment spans residues 280-300; sequence TYSMVGALNKLPIALSGLIFF. The Lumenal segment spans residues 301–304; sequence DAPR. A helical membrane pass occupies residues 305–325; it reads NFLSILSIFIGFLSGIIYAVA. Residues 326–337 lie on the Cytoplasmic side of the membrane; it reads KQKKQQAQPLRK.

The protein belongs to the TPT transporter family. SLC35D subfamily. Homooligomer.

It localises to the golgi apparatus membrane. The protein resides in the cytoplasmic vesicle membrane. Its subcellular location is the endoplasmic reticulum membrane. Its function is as follows. Involved in the import of GDP-mannose from the cytoplasm into the Golgi lumen. Defective copy causes severe glycosylation defect and abnormal retention of soluble endoplasmic reticulum proteins. Involved in vanadate sensitivity. The polypeptide is GDP-mannose transporter 1 (VRG4) (Saccharomyces cerevisiae (strain YJM789) (Baker's yeast)).